A 339-amino-acid polypeptide reads, in one-letter code: Ketol-acid reductoisomerase (NADP(+)) (339 aa).

The 182-residue stretch at 1 to 182 folds into the KARI N-terminal Rossmann domain; that stretch reads MRVYYDRDAD…GGGRSGIIET (182 aa). Residues 24-27, Lys-48, Ser-51, Thr-53, and 83-86 each bind NADP(+); these read YGSQ and DELQ. His-108 is an active-site residue. An NADP(+)-binding site is contributed by Gly-134. One can recognise a KARI C-terminal knotted domain in the interval 183-328; that stretch reads NFKEECETDL…AKLRGMMPWI (146 aa). Mg(2+) is bound by residues Asp-191, Glu-195, Glu-227, and Glu-231. Substrate is bound at residue Ser-252.

The protein belongs to the ketol-acid reductoisomerase family. The cofactor is Mg(2+).

It carries out the reaction (2R)-2,3-dihydroxy-3-methylbutanoate + NADP(+) = (2S)-2-acetolactate + NADPH + H(+). It catalyses the reaction (2R,3R)-2,3-dihydroxy-3-methylpentanoate + NADP(+) = (S)-2-ethyl-2-hydroxy-3-oxobutanoate + NADPH + H(+). The protein operates within amino-acid biosynthesis; L-isoleucine biosynthesis; L-isoleucine from 2-oxobutanoate: step 2/4. Its pathway is amino-acid biosynthesis; L-valine biosynthesis; L-valine from pyruvate: step 2/4. Its function is as follows. Involved in the biosynthesis of branched-chain amino acids (BCAA). Catalyzes an alkyl-migration followed by a ketol-acid reduction of (S)-2-acetolactate (S2AL) to yield (R)-2,3-dihydroxy-isovalerate. In the isomerase reaction, S2AL is rearranged via a Mg-dependent methyl migration to produce 3-hydroxy-3-methyl-2-ketobutyrate (HMKB). In the reductase reaction, this 2-ketoacid undergoes a metal-dependent reduction by NADPH to yield (R)-2,3-dihydroxy-isovalerate. The chain is Ketol-acid reductoisomerase (NADP(+)) from Sinorhizobium medicae (strain WSM419) (Ensifer medicae).